A 710-amino-acid polypeptide reads, in one-letter code: Dihydroxyacetone synthase (710 aa).

Residues His78 and 128–130 (GPL) each bind thiamine diphosphate. Asp169, Asn199, and Val201 together coordinate Mg(2+). Thiamine diphosphate is bound at residue Asn199. His275, Glu433, and Phe461 together coordinate thiamine diphosphate. Glu433 acts as the Proton donor in catalysis. The short motif at 708-710 (NKL) is the Microbody targeting signal element.

The protein belongs to the transketolase family. Mg(2+) serves as cofactor. The cofactor is Ca(2+). It depends on Mn(2+) as a cofactor. Co(2+) is required as a cofactor. Requires thiamine diphosphate as cofactor.

The protein resides in the peroxisome. The enzyme catalyses D-xylulose 5-phosphate + formaldehyde = dihydroxyacetone + D-glyceraldehyde 3-phosphate. In terms of biological role, this is the major methanol assimilatory enzyme from the methylotrophic Hansenula polymorpha. The polypeptide is Dihydroxyacetone synthase (DAS) (Pichia angusta (Yeast)).